The primary structure comprises 153 residues: Ribosome maturation factor RimP (153 aa).

The protein belongs to the RimP family.

The protein localises to the cytoplasm. Required for maturation of 30S ribosomal subunits. This Vesicomyosocius okutanii subsp. Calyptogena okutanii (strain HA) protein is Ribosome maturation factor RimP.